The sequence spans 215 residues: Methylthioribulose-1-phosphate dehydratase (215 aa).

Positions 103 and 105 each coordinate Zn(2+).

The protein belongs to the aldolase class II family. MtnB subfamily. Zn(2+) serves as cofactor.

It carries out the reaction 5-(methylsulfanyl)-D-ribulose 1-phosphate = 5-methylsulfanyl-2,3-dioxopentyl phosphate + H2O. It functions in the pathway amino-acid biosynthesis; L-methionine biosynthesis via salvage pathway; L-methionine from S-methyl-5-thio-alpha-D-ribose 1-phosphate: step 2/6. Catalyzes the dehydration of methylthioribulose-1-phosphate (MTRu-1-P) into 2,3-diketo-5-methylthiopentyl-1-phosphate (DK-MTP-1-P). The chain is Methylthioribulose-1-phosphate dehydratase from Persephonella marina (strain DSM 14350 / EX-H1).